The primary structure comprises 275 residues: Fos-related antigen 1 (275 aa).

2 disordered regions span residues 1 to 33 (MYRDFGEPGPSSGAGSAYGRPAQPQQAQTQTVQ) and 71 to 115 (TYPQ…VRRE). Residues 7-33 (EPGPSSGAGSAYGRPAQPQQAQTQTVQ) show a composition bias toward low complexity. One can recognise a bZIP domain in the interval 107–170 (EERRRVRRER…ERLELVLEAH (64 aa)). Positions 109–129 (RRRVRRERNKLAAAKCRNRRK) are basic motif. The interval 135–163 (LQAETDKLEDEKSGLQREIEELQKQKERL) is leucine-zipper. Residues 171–184 (RPICKIPEEDKKDT) are compositionally biased toward basic and acidic residues. A disordered region spans residues 171–275 (RPICKIPEED…PLGSPTLLAL (105 aa)). Low complexity-rich tracts occupy residues 185-194 (GGTSSTSGAG), 219-237 (LHTPTLMTTPSLTPFTPSL), and 256-275 (SSSSGDPSSDPLGSPTLLAL). Position 269 is a phosphoserine (Ser269).

This sequence belongs to the bZIP family. Fos subfamily. As to quaternary structure, heterodimer. Interacts with the BAF multiprotein chromatin-remodeling complex subunits SMARCB1 and SMARCD1. Interacts with ARID1A and JUN.

The protein resides in the nucleus. This is Fos-related antigen 1 (Fosl1) from Rattus norvegicus (Rat).